A 342-amino-acid chain; its full sequence is Uroporphyrinogen decarboxylase (342 aa).

Residues R22–R26, F41, D72, Y146, S201, and H317 each bind substrate.

The protein belongs to the uroporphyrinogen decarboxylase family. Homodimer.

It localises to the cytoplasm. The enzyme catalyses uroporphyrinogen III + 4 H(+) = coproporphyrinogen III + 4 CO2. The protein operates within porphyrin-containing compound metabolism; protoporphyrin-IX biosynthesis; coproporphyrinogen-III from 5-aminolevulinate: step 4/4. Catalyzes the decarboxylation of four acetate groups of uroporphyrinogen-III to yield coproporphyrinogen-III. This chain is Uroporphyrinogen decarboxylase, found in Orientia tsutsugamushi (strain Boryong) (Rickettsia tsutsugamushi).